The primary structure comprises 122 residues: MVQQETRLRVADNTGAKEILCIRVLGGSHVRYGRVGDVIVASVKEATPGGAVKKGEVVRAVIVRTAKEYGRPDGSHIRFDDNAAVIIGKDNNPRGTRIFGPVARELRERAFMKIISLAPEVL.

This sequence belongs to the universal ribosomal protein uL14 family. Part of the 50S ribosomal subunit. Forms a cluster with proteins L3 and L19. In the 70S ribosome, L14 and L19 interact and together make contacts with the 16S rRNA in bridges B5 and B8.

Functionally, binds to 23S rRNA. Forms part of two intersubunit bridges in the 70S ribosome. The polypeptide is Large ribosomal subunit protein uL14 (Roseiflexus castenholzii (strain DSM 13941 / HLO8)).